A 397-amino-acid chain; its full sequence is Alpha-lytic protease (397 aa).

Residues 1 to 24 (MYVSNHRSRRVARVSVSCLVAALA) form the signal peptide. Residues 25–199 (AMSCGAALAA…ESSPGKLQTT (175 aa)) constitute a propeptide that is removed on maturation. C216 and C236 form a disulfide bridge. Catalysis depends on charge relay system residues H235 and D262. 2 cysteine pairs are disulfide-bonded: C300–C310 and C336–C369. S342 serves as the catalytic Charge relay system.

This sequence belongs to the peptidase S1 family.

The enzyme catalyses Preferential cleavage: Ala-|-Xaa, Val-|-Xaa in bacterial cell walls, elastin and other proteins.. This is Alpha-lytic protease (alpha-LP) from Lysobacter enzymogenes.